The sequence spans 416 residues: Nucleoside transporter 1 (416 aa).

Positions 1-26 (MSISKESSKTMIDIEKKGGEGKDGKG) are enriched in basic and acidic residues. Residues 1–28 (MSISKESSKTMIDIEKKGGEGKDGKGGS) form a disordered region. Topologically, residues 1-35 (MSISKESSKTMIDIEKKGGEGKDGKGGSKMTKNEQ) are cytoplasmic. Residues 36-58 (FLLPFTFILIGLSSLNVWNTALG) form a helical membrane-spanning segment. Residues 59–64 (LNINFK) are Extracellular-facing. The chain crosses the membrane as a helical span at residues 65-83 (YNTFQITGLVCSSIIALFV). The Cytoplasmic portion of the chain corresponds to 84-87 (KVPK). Residues 88 to 107 (MLLPFALGGLAMLCAGFQIA) traverse the membrane as a helical segment. Over 108–119 (HQCFTFEQFDTY) the chain is Extracellular. Residues 120 to 139 (CLIAFIVIGIMAGLAQTIAF) form a helical membrane-spanning segment. Topologically, residues 140 to 148 (SVGTTMEEN) are cytoplasmic. The helical transmembrane segment at 149-171 (MGGYMSAGIGISGVFIFIINLLL) threads the bilayer. Residues 172–187 (DQIVPDQKKFNVNEAK) are Extracellular-facing. The chain crosses the membrane as a helical span at residues 188–210 (LLYLFLICELCLVLAIIFSVCNL). The Cytoplasmic portion of the chain corresponds to 211 to 241 (ELSSSKTSKEEEYSDKEQGLSYLELLKDSYK). A helical transmembrane segment spans residues 242 to 261 (AILAMFLVNWLSLQLFPGVG). Residues 262 to 273 (HKKWQESHNISD) are Extracellular-facing. A helical transmembrane segment spans residues 274 to 292 (YNVTLIVGMFQVFDFVSRY). Over 293 to 311 (PPNLSHMKIFKWFTFSLNK) the chain is Cytoplasmic. A helical membrane pass occupies residues 312–331 (LLLLNFLRLLFIPWFVINAA). The Extracellular segment spans residues 332-343 (CDLPIFTNIVQQ). The helical transmembrane segment at 344–366 (CVCMAMLAFTNGWFNTVPFLVFV) threads the bilayer. Over 367–380 (QELKKAKKKKDIET) the chain is Cytoplasmic. A helical membrane pass occupies residues 381–403 (ISTFLVVAMFVGLFMGIWTTYIY). Residues 404–416 (DFFPIVIKRYVVP) are Extracellular-facing.

It belongs to the SLC29A/ENT transporter (TC 2.A.57) family.

Its subcellular location is the cell membrane. The catalysed reaction is inosine(in) = inosine(out). The enzyme catalyses adenosine(in) = adenosine(out). It catalyses the reaction hypoxanthine(out) = hypoxanthine(in). It carries out the reaction guanosine(in) = guanosine(out). The catalysed reaction is guanine(out) = guanine(in). The enzyme catalyses thymidine(in) = thymidine(out). It catalyses the reaction uridine(out) = uridine(in). It carries out the reaction uracil(in) = uracil(out). The catalysed reaction is thymine(out) = thymine(in). The enzyme catalyses adenine(out) = adenine(in). It catalyses the reaction cytosine(out) = cytosine(in). It carries out the reaction xanthine(out) = xanthine(in). Nucleoside and nucleobase transporter with a broad substrate specificity. This chain is Nucleoside transporter 1, found in Plasmodium vivax (strain Salvador I).